The sequence spans 583 residues: DNA ligase (583 aa).

Glutamate 249 serves as a coordination point for ATP. Lysine 251 (N6-AMP-lysine intermediate) is an active-site residue. ATP-binding residues include arginine 256, arginine 271, glutamate 301, phenylalanine 341, arginine 416, and lysine 422.

The protein belongs to the ATP-dependent DNA ligase family. Requires Mg(2+) as cofactor.

The enzyme catalyses ATP + (deoxyribonucleotide)n-3'-hydroxyl + 5'-phospho-(deoxyribonucleotide)m = (deoxyribonucleotide)n+m + AMP + diphosphate.. DNA ligase that seals nicks in double-stranded DNA during DNA replication, DNA recombination and DNA repair. The sequence is that of DNA ligase from Pyrobaculum calidifontis (strain DSM 21063 / JCM 11548 / VA1).